We begin with the raw amino-acid sequence, 279 residues long: Urease accessory protein UreD (279 aa).

The protein belongs to the UreD family. UreD, UreF and UreG form a complex that acts as a GTP-hydrolysis-dependent molecular chaperone, activating the urease apoprotein by helping to assemble the nickel containing metallocenter of UreC. The UreE protein probably delivers the nickel.

It is found in the cytoplasm. In terms of biological role, required for maturation of urease via the functional incorporation of the urease nickel metallocenter. This chain is Urease accessory protein UreD, found in Brucella suis (strain ATCC 23445 / NCTC 10510).